The following is a 335-amino-acid chain: Phenylalanine--tRNA ligase alpha subunit (335 aa).

Glutamate 262 serves as a coordination point for Mg(2+).

It belongs to the class-II aminoacyl-tRNA synthetase family. Phe-tRNA synthetase alpha subunit type 1 subfamily. As to quaternary structure, tetramer of two alpha and two beta subunits. It depends on Mg(2+) as a cofactor.

It localises to the cytoplasm. The enzyme catalyses tRNA(Phe) + L-phenylalanine + ATP = L-phenylalanyl-tRNA(Phe) + AMP + diphosphate + H(+). This is Phenylalanine--tRNA ligase alpha subunit from Prochlorococcus marinus (strain NATL2A).